A 373-amino-acid polypeptide reads, in one-letter code: Probable tRNA sulfurtransferase (373 aa).

One can recognise a THUMP domain in the interval 54-158; sequence NKNIEELSKV…NDVAYFYHKI (105 aa). ATP contacts are provided by residues 176–177, 201–202, Lys-256, Gly-278, and Gln-287; these read LF and NF.

It belongs to the ThiI family.

The protein resides in the cytoplasm. The catalysed reaction is [ThiI sulfur-carrier protein]-S-sulfanyl-L-cysteine + a uridine in tRNA + 2 reduced [2Fe-2S]-[ferredoxin] + ATP + H(+) = [ThiI sulfur-carrier protein]-L-cysteine + a 4-thiouridine in tRNA + 2 oxidized [2Fe-2S]-[ferredoxin] + AMP + diphosphate. The enzyme catalyses [ThiS sulfur-carrier protein]-C-terminal Gly-Gly-AMP + S-sulfanyl-L-cysteinyl-[cysteine desulfurase] + AH2 = [ThiS sulfur-carrier protein]-C-terminal-Gly-aminoethanethioate + L-cysteinyl-[cysteine desulfurase] + A + AMP + 2 H(+). Its pathway is cofactor biosynthesis; thiamine diphosphate biosynthesis. Its function is as follows. Catalyzes the ATP-dependent transfer of a sulfur to tRNA to produce 4-thiouridine in position 8 of tRNAs, which functions as a near-UV photosensor. Also catalyzes the transfer of sulfur to the sulfur carrier protein ThiS, forming ThiS-thiocarboxylate. This is a step in the synthesis of thiazole, in the thiamine biosynthesis pathway. The sulfur is donated as persulfide by IscS. This is Probable tRNA sulfurtransferase from Saccharolobus islandicus (strain M.16.27) (Sulfolobus islandicus).